The following is a 122-amino-acid chain: Large ribosomal subunit protein uL18 (122 aa).

The protein belongs to the universal ribosomal protein uL18 family. As to quaternary structure, part of the 50S ribosomal subunit; part of the 5S rRNA/L5/L18/L25 subcomplex. Contacts the 5S and 23S rRNAs.

Its function is as follows. This is one of the proteins that bind and probably mediate the attachment of the 5S RNA into the large ribosomal subunit, where it forms part of the central protuberance. The polypeptide is Large ribosomal subunit protein uL18 (Leptospira biflexa serovar Patoc (strain Patoc 1 / Ames)).